Reading from the N-terminus, the 268-residue chain is Tubulin-specific chaperone C (268 aa).

In terms of domain architecture, C-CAP/cofactor C-like spans 98–255 (PAYTTTLKKH…SAFAFEDFDI (158 aa)).

It localises to the cytoplasm. Its subcellular location is the cytoskeleton. Its function is as follows. Tubulin-folding protein; involved in the early step of the tubulin folding pathway. The sequence is that of Tubulin-specific chaperone C (CIN2) from Saccharomyces cerevisiae (strain ATCC 204508 / S288c) (Baker's yeast).